A 491-amino-acid polypeptide reads, in one-letter code: Glutamyl-tRNA(Gln) amidotransferase subunit A (491 aa).

Residues Lys81 and Ser156 each act as charge relay system in the active site. Catalysis depends on Ser180, which acts as the Acyl-ester intermediate.

This sequence belongs to the amidase family. GatA subfamily. Heterotrimer of A, B and C subunits.

The enzyme catalyses L-glutamyl-tRNA(Gln) + L-glutamine + ATP + H2O = L-glutaminyl-tRNA(Gln) + L-glutamate + ADP + phosphate + H(+). Its function is as follows. Allows the formation of correctly charged Gln-tRNA(Gln) through the transamidation of misacylated Glu-tRNA(Gln) in organisms which lack glutaminyl-tRNA synthetase. The reaction takes place in the presence of glutamine and ATP through an activated gamma-phospho-Glu-tRNA(Gln). The sequence is that of Glutamyl-tRNA(Gln) amidotransferase subunit A from Alcanivorax borkumensis (strain ATCC 700651 / DSM 11573 / NCIMB 13689 / SK2).